A 156-amino-acid chain; its full sequence is MPNIHDVEVRDLQVNADQRGHLVEVFRSDWDEYEIDPEMSYYSMTYPGVVRAWHRHLEGQIDHFVCPKGRITVGIYDDREDSPTQGELDTFVIGEHNQQVIRIPGDCWHGFKAIGDEPSLLINYPTNLYDYEDPDEERIPYDDDRIPYDWNAEIHG.

Substrate-binding positions include Arg19, Glu24, 39–41, Arg51, His54, and His109; that span reads MSY.

The protein belongs to the dTDP-4-dehydrorhamnose 3,5-epimerase family.

It participates in protein modification; protein glycosylation. It functions in the pathway cell surface structure biogenesis; S-layer biogenesis. Functionally, epimerase involved in N-glycan biosynthetic pathway that takes place under low-salt conditions (1.75 M instead of 3.4 M). Participates in the formation of the tetrasaccharide present at 'Asn-532' of S-layer glycoprotein Csg, consisting of a sulfated hexose, 2 hexoses and rhamnose. Involved in the addition of final rhamnose (sugar 4) of the tetrasaccharide on the dolichol phosphate carrier. The chain is Probable low-salt glycan biosynthesis epimerase Agl13 (agl13) from Haloferax volcanii (strain ATCC 29605 / DSM 3757 / JCM 8879 / NBRC 14742 / NCIMB 2012 / VKM B-1768 / DS2) (Halobacterium volcanii).